We begin with the raw amino-acid sequence, 238 residues long: Uridylate kinase (238 aa).

Residue 12 to 15 (KLSG) participates in ATP binding. UMP is bound at residue G54. G55 and R59 together coordinate ATP. UMP-binding positions include D74 and 135-142 (TGNPFFTT). 3 residues coordinate ATP: T162, Y168, and D171.

Belongs to the UMP kinase family. As to quaternary structure, homohexamer.

Its subcellular location is the cytoplasm. The enzyme catalyses UMP + ATP = UDP + ADP. It functions in the pathway pyrimidine metabolism; CTP biosynthesis via de novo pathway; UDP from UMP (UMPK route): step 1/1. Inhibited by UTP. Its function is as follows. Catalyzes the reversible phosphorylation of UMP to UDP. The chain is Uridylate kinase from Methylobacillus flagellatus (strain ATCC 51484 / DSM 6875 / VKM B-1610 / KT).